Here is a 70-residue protein sequence, read N- to C-terminus: DNA-directed RNA polymerases I, II, and III subunit RPABC4 (70 aa).

Positions 31, 34, 48, and 51 each coordinate Zn(2+). The C4-type zinc-finger motif lies at 31–51 (CAECSSKLSLSRTDAVRCKDC).

This sequence belongs to the archaeal Rpo12/eukaryotic RPC10 RNA polymerase subunit family. Component of the RNA polymerase I (Pol I), RNA polymerase II (Pol II) and RNA polymerase III (Pol III) complexes. Component of the RNA polymerase I (Pol I) complex consisting of 14 subunits: RPA135, RPA190, RPC40, RPA14, RPB5, RPO26, RPA43, RPB8, RPA12, RPB10, RPC19, RPC10, RPA49 and RPA34. The complex is composed of a horseshoe-shaped core containing ten subunits (RPA135, RPA190, RPB5, RPO26, RPB8, RPB10, RPC10, RPA12, RPC19 and RPC40) where RPA135 and RPA190 form the DNA-binding cleft. Outside of the core, RPA14 and RPA43 form the stalk that mediates interactions with transcription initiation factors and newly synthesized RNA. Component of the RNA polymerase II (Pol II) complex consisting of 12 subunits: RPO21, RPB2, RPB3, RPB4, RPB5, RPO26, RPB7, RPB8, RPB9, RPB10 and RPC10. Component of the RNA polymerase III (Pol III) complex consisting of 17 subunits. Interacts, via its C-terminus, with TFIIIC subunit TFC4. Post-translationally, the N-terminus is blocked.

It localises to the nucleus. The protein resides in the nucleolus. The protein localises to the peroxisome. Its function is as follows. DNA-dependent RNA polymerases catalyze the transcription of DNA into RNA using the four ribonucleoside triphosphates as substrates. Common component of RNA polymerases I, II and III which synthesize ribosomal RNA precursors, mRNA precursors and many functional non-coding RNAs, and a small RNAs, such as 5S rRNA and tRNAs, respectively. RNA polymerases are composed of mobile elements that move relative to each other. In Pol II, the core element with the central large cleft comprises RPB3, RBP10, RPB11, RPB12 and regions of RPB1 and RPB2 forming the active center. The polypeptide is DNA-directed RNA polymerases I, II, and III subunit RPABC4 (RPC10) (Saccharomyces cerevisiae (strain ATCC 204508 / S288c) (Baker's yeast)).